Consider the following 73-residue polypeptide: Cell division protein ZapB (73 aa).

The stretch at 3–66 (LELLSQLETK…SWSDKVNGLV (64 aa)) forms a coiled coil.

Belongs to the ZapB family. In terms of assembly, homodimer. The ends of the coiled-coil dimer bind to each other, forming polymers. Interacts with FtsZ.

The protein resides in the cytoplasm. Its function is as follows. Non-essential, abundant cell division factor that is required for proper Z-ring formation. It is recruited early to the divisome by direct interaction with FtsZ, stimulating Z-ring assembly and thereby promoting cell division earlier in the cell cycle. Its recruitment to the Z-ring requires functional FtsA or ZipA. The polypeptide is Cell division protein ZapB (Shewanella frigidimarina (strain NCIMB 400)).